Here is a 330-residue protein sequence, read N- to C-terminus: Src kinase-associated phosphoprotein 2-A (330 aa).

A disordered region spans residues 53 to 77; sequence QDFQDKAETDDQEENDGFSLPPDAV. The PH domain occupies 105 to 208; the sequence is DYLRAGYLEK…WINVIMNARG (104 aa). The disordered stretch occupies residues 228-261; the sequence is SHEEDIYEELPEESEKPVTGSETPKATPVPVNNT. A compositionally biased stretch (polar residues) spans 247-261; the sequence is GSETPKATPVPVNNT. In terms of domain architecture, SH3 spans 268 to 329; sequence DYANFYRGLW…PKAYIIEMYD (62 aa).

It belongs to the SKAP family. Phosphorylated on tyrosines.

The protein resides in the cytoplasm. In terms of biological role, may be involved in B-cell and macrophage adhesion processes. May play a role in src signaling pathway. The sequence is that of Src kinase-associated phosphoprotein 2-A (skap2-a) from Xenopus laevis (African clawed frog).